The following is a 432-amino-acid chain: Gamma-glutamyl phosphate reductase (432 aa).

Belongs to the gamma-glutamyl phosphate reductase family.

The protein resides in the cytoplasm. The enzyme catalyses L-glutamate 5-semialdehyde + phosphate + NADP(+) = L-glutamyl 5-phosphate + NADPH + H(+). The protein operates within amino-acid biosynthesis; L-proline biosynthesis; L-glutamate 5-semialdehyde from L-glutamate: step 2/2. In terms of biological role, catalyzes the NADPH-dependent reduction of L-glutamate 5-phosphate into L-glutamate 5-semialdehyde and phosphate. The product spontaneously undergoes cyclization to form 1-pyrroline-5-carboxylate. The protein is Gamma-glutamyl phosphate reductase of Ruminiclostridium cellulolyticum (strain ATCC 35319 / DSM 5812 / JCM 6584 / H10) (Clostridium cellulolyticum).